The sequence spans 2395 residues: Helicase ssl-1 (2395 aa).

The segment covering 1-12 (MPATPVRASSTR) has biased composition (low complexity). The interval 1–62 (MPATPVRASS…EKKKKKTSDD (62 aa)) is disordered. An HSA domain is found at 227 to 300 (LPKCVEPERN…IKEKRKMCAG (74 aa)). Residues 354 to 363 (LVSSSKSPSI) are compositionally biased toward polar residues. 2 disordered regions span residues 354 to 404 (LVSS…VRQE) and 444 to 504 (EKLE…HGVL). Composition is skewed to basic and acidic residues over residues 365-375 (SDRDDKDEEFK), 394-404 (KSQKKEDVRQE), and 444-462 (EKLE…NEEK). A coiled-coil region spans residues 388–464 (TIANAEKSQK…ACGDNEEKME (77 aa)). The span at 470 to 490 (SSDAQKPSTSSSDLTAEQLQD) shows a compositional bias: polar residues. Residues 570-735 (VTLYEKNLNG…WSLMHFLMPT (166 aa)) enclose the Helicase ATP-binding domain. Residue 583–590 (DEMGLGKT) coordinates ATP. Positions 963 to 982 (AQPLQNGNSIPQNAPNRPQT) are disordered. In terms of domain architecture, Helicase C-terminal spans 1196-1342 (LLRQLYLYKH…ELAIDEAGFT (147 aa)). Residues 1452–1476 (KPEFEEECKEAEALIDQKREEWDKN) are a coiled coil. Disordered regions lie at residues 1615-1706 (ESAA…EEPD), 1977-2073 (SIQH…RRNA), 2092-2143 (QSGK…PQQR), 2276-2306 (QMRS…RPLV), and 2350-2395 (MQMP…PPQN). Low complexity-rich tracts occupy residues 1647-1669 (QQPT…QQQQ) and 1981-1995 (LQSS…QNLQ). The span at 1996 to 2019 (NSHNSEQRNNVQNMHQNQYNSSQN) shows a compositional bias: polar residues. Composition is skewed to low complexity over residues 2051 to 2073 (LVQQ…RRNA) and 2092 to 2114 (QSGK…SSND). The segment covering 2115–2129 (GQGGASTVGGGGGGS) has biased composition (gly residues). Residues 2130–2142 (QQPHQQQQQQPQQ) are compositionally biased toward low complexity. Over residues 2281 to 2299 (NGGGVGGQGGLQGGPGGPQ) the composition is skewed to gly residues. A compositionally biased stretch (low complexity) spans 2361 to 2377 (QQQAPPQSSQQASQQAP).

Belongs to the SNF2/RAD54 helicase family. SWR1 subfamily.

The protein resides in the nucleus. Its function is as follows. Probable catalytic component of a chromatin-remodeling complex which mediates the ATP-dependent exchange of histone H2A variant H2AV/htz-1 for H2A, leading to transcriptional regulation of selected genes by chromatin remodeling. Involved in foregut development, and may be involved in vulval development. This chain is Helicase ssl-1 (ssl-1), found in Caenorhabditis elegans.